The chain runs to 503 residues: Probable cytosol aminopeptidase (503 aa).

2 residues coordinate Mn(2+): Lys270 and Asp275. Lys282 is an active-site residue. Positions 293, 352, and 354 each coordinate Mn(2+). The active site involves Arg356.

Belongs to the peptidase M17 family. Requires Mn(2+) as cofactor.

Its subcellular location is the cytoplasm. The catalysed reaction is Release of an N-terminal amino acid, Xaa-|-Yaa-, in which Xaa is preferably Leu, but may be other amino acids including Pro although not Arg or Lys, and Yaa may be Pro. Amino acid amides and methyl esters are also readily hydrolyzed, but rates on arylamides are exceedingly low.. It catalyses the reaction Release of an N-terminal amino acid, preferentially leucine, but not glutamic or aspartic acids.. Functionally, presumably involved in the processing and regular turnover of intracellular proteins. Catalyzes the removal of unsubstituted N-terminal amino acids from various peptides. In Shigella boydii serotype 4 (strain Sb227), this protein is Probable cytosol aminopeptidase.